A 524-amino-acid chain; its full sequence is Serine/threonine-protein phosphatase 2A 56 kDa regulatory subunit gamma isoform (524 aa).

Position 1 is an N-acetylmethionine (Met-1). A Nuclear localization signal motif is present at residues 472 to 489 (RKTVSDEARQAQKDPKKE). The tract at residues 476-524 (SDEARQAQKDPKKERPLARRKSELPQDPHTKKALEAHCRADELVPQDGR) is disordered.

It belongs to the phosphatase 2A regulatory subunit B56 family. As to quaternary structure, PP2A consists of a common heterodimeric core enzyme, composed of PPP2CA a 36 kDa catalytic subunit (subunit C) and PPP2R1A a 65 kDa constant regulatory subunit (PR65 or subunit A), that associates with a variety of regulatory subunits. Proteins that associate with the core dimer include three families of regulatory subunits B (the R2/B/PR55/B55, R3/B''/PR72/PR130/PR59 and R5/B'/B56 families), the 48 kDa variable regulatory subunit, viral proteins, and cell signaling molecules. Interacts with SGO1. Interacts with SGO1; the interaction is direct. May interact with TP53. Interacts with IER3 and/or ERK kinases; regulates ERK dephosphorylation Interacts with CIP2A; this interaction stabilizes CIP2A. In terms of tissue distribution, highly expressed in testis, heart and spleen. Also found in brain and skeletal muscle.

Its subcellular location is the nucleus. The protein localises to the chromosome. It localises to the centromere. The B regulatory subunit might modulate substrate selectivity and catalytic activity, and might also direct the localization of the catalytic enzyme to a particular subcellular compartment. The PP2A-PPP2R5C holoenzyme may activate TP53 and play a role in DNA damage-induced inhibition of cell proliferation. PP2A-PPP2R5C may also regulate the ERK signaling pathway through ERK dephosphorylation. The chain is Serine/threonine-protein phosphatase 2A 56 kDa regulatory subunit gamma isoform (PPP2R5C) from Oryctolagus cuniculus (Rabbit).